Here is a 282-residue protein sequence, read N- to C-terminus: Biotin synthase (282 aa).

The 228-residue stretch at 1–228 folds into the Radical SAM core domain; sequence MQEIFLCSIS…NARLMVAGGR (228 aa). The [4Fe-4S] cluster site is built by C17, C21, and C24. [2Fe-2S] cluster is bound by residues C61, C96, C154, and R221.

This sequence belongs to the radical SAM superfamily. Biotin synthase family. Homodimer. [4Fe-4S] cluster is required as a cofactor. Requires [2Fe-2S] cluster as cofactor.

The catalysed reaction is (4R,5S)-dethiobiotin + (sulfur carrier)-SH + 2 reduced [2Fe-2S]-[ferredoxin] + 2 S-adenosyl-L-methionine = (sulfur carrier)-H + biotin + 2 5'-deoxyadenosine + 2 L-methionine + 2 oxidized [2Fe-2S]-[ferredoxin]. It participates in cofactor biosynthesis; biotin biosynthesis; biotin from 7,8-diaminononanoate: step 2/2. Catalyzes the conversion of dethiobiotin (DTB) to biotin by the insertion of a sulfur atom into dethiobiotin via a radical-based mechanism. This chain is Biotin synthase, found in Helicobacter pylori (strain G27).